Consider the following 313-residue polypeptide: Olfactory receptor 5H15 (313 aa).

The Extracellular portion of the chain corresponds to 1 to 28 (MEEENATLLTEFVLTGFLYQPQWKIPLF). Asn-5 carries N-linked (GlcNAc...) asparagine glycosylation. Residues 29 to 49 (LAFLVIYLITIMGNLGLIAVI) form a helical membrane-spanning segment. Topologically, residues 50 to 56 (WKDPHLH) are cytoplasmic. Residues 57 to 77 (IPMYLLLGNLAFVDAWISSTV) form a helical membrane-spanning segment. Over 78 to 98 (TPKMLNNFLAKSKMISLSECK) the chain is Extracellular. The cysteines at positions 97 and 179 are disulfide-linked. Residues 99–119 (IQFFSIAIGVTTECFLLATMA) form a helical membrane-spanning segment. At 120–143 (YDRYVAICKPLLYPAIMTNGLCIR) the chain is on the cytoplasmic side. Residues 144–164 (LLILSYIAGILHALIHEGFLF) form a helical membrane-spanning segment. Residues 165 to 195 (RLTFCNSNIVHHIYCDTIPLSKISCTDSSIN) lie on the Extracellular side of the membrane. The helical transmembrane segment at 196-216 (FLMVFIFSGSIQVFSIVTILI) threads the bilayer. At 217-240 (SYTFVLFTVLEKKSDKGVRKAFST) the chain is on the cytoplasmic side. A helical membrane pass occupies residues 241 to 261 (CGAHLFSVCLYYGPLLLMYVG). Residues 262-271 (PASPQADGQN) lie on the Extracellular side of the membrane. A helical transmembrane segment spans residues 272–292 (MVEPLFYTVIIPLLNPIIYSL). The Cytoplasmic portion of the chain corresponds to 293 to 313 (RNKQVIVSFIKMLKRNVKVSY).

Belongs to the G-protein coupled receptor 1 family.

It localises to the cell membrane. In terms of biological role, odorant receptor. The sequence is that of Olfactory receptor 5H15 (OR5H15) from Homo sapiens (Human).